Here is a 214-residue protein sequence, read N- to C-terminus: Ribosomal RNA large subunit methyltransferase E (214 aa).

The S-adenosyl-L-methionine site is built by Gly60, Trp62, Asp86, Asp102, and Asp127. Lys167 functions as the Proton acceptor in the catalytic mechanism.

It belongs to the class I-like SAM-binding methyltransferase superfamily. RNA methyltransferase RlmE family.

It localises to the cytoplasm. It catalyses the reaction uridine(2552) in 23S rRNA + S-adenosyl-L-methionine = 2'-O-methyluridine(2552) in 23S rRNA + S-adenosyl-L-homocysteine + H(+). Specifically methylates the uridine in position 2552 of 23S rRNA at the 2'-O position of the ribose in the fully assembled 50S ribosomal subunit. The sequence is that of Ribosomal RNA large subunit methyltransferase E from Herminiimonas arsenicoxydans.